Reading from the N-terminus, the 562-residue chain is Cytochrome c oxidase subunit 1 (562 aa).

Residues 21-41 (TLYFLVLGFLALIVGSLFGPF) traverse the membrane as a helical segment. Histidine 72 is a binding site for Fe(II)-heme a. The next 8 helical transmembrane spans lie at 74–94 (VLNA…YLPA), 105–125 (LMWL…LPLL), 144–164 (AFYL…YIVL), 187–207 (VVFW…AVLF), 227–247 (LFWW…YAII), 267–287 (LAFL…QFAD), 300–320 (VLTL…AASL), and 345–365 (AFVA…GGIV). Residues histidine 233, tyrosine 237, histidine 282, and histidine 283 each contribute to the Cu cation site. The segment at residues 233 to 237 (HPIVY) is a cross-link (1'-histidyl-3'-tyrosine (His-Tyr)). A heme a3-binding site is contributed by histidine 384. 4 consecutive transmembrane segments (helical) span residues 385–405 (FHLQ…YWLL), 420–440 (LGLA…VGLH), 471–491 (VLAG…LFSV), and 527–547 (IGFW…PTLV). Position 386 (histidine 386) interacts with Fe(II)-heme a.

This sequence belongs to the heme-copper respiratory oxidase family. Requires heme as cofactor. The cofactor is Cu cation.

It is found in the cell membrane. The enzyme catalyses 4 Fe(II)-[cytochrome c] + O2 + 8 H(+)(in) = 4 Fe(III)-[cytochrome c] + 2 H2O + 4 H(+)(out). The protein operates within energy metabolism; oxidative phosphorylation. The sequence is that of Cytochrome c oxidase subunit 1 (cbaA) from Thermus thermophilus (strain ATCC 27634 / DSM 579 / HB8).